Here is a 394-residue protein sequence, read N- to C-terminus: UPF0229 protein RBAM_009260 (394 aa).

Belongs to the UPF0229 family.

This is UPF0229 protein RBAM_009260 from Bacillus velezensis (strain DSM 23117 / BGSC 10A6 / LMG 26770 / FZB42) (Bacillus amyloliquefaciens subsp. plantarum).